Consider the following 426-residue polypeptide: Serine--tRNA ligase (426 aa).

Position 233–235 (233–235 (TAE)) interacts with L-serine. ATP is bound at residue 264–266 (RRE). L-serine is bound at residue glutamate 287. An ATP-binding site is contributed by 351-354 (EISS). Residue serine 386 coordinates L-serine.

The protein belongs to the class-II aminoacyl-tRNA synthetase family. Type-1 seryl-tRNA synthetase subfamily. Homodimer. The tRNA molecule binds across the dimer.

It localises to the cytoplasm. The enzyme catalyses tRNA(Ser) + L-serine + ATP = L-seryl-tRNA(Ser) + AMP + diphosphate + H(+). It catalyses the reaction tRNA(Sec) + L-serine + ATP = L-seryl-tRNA(Sec) + AMP + diphosphate + H(+). The protein operates within aminoacyl-tRNA biosynthesis; selenocysteinyl-tRNA(Sec) biosynthesis; L-seryl-tRNA(Sec) from L-serine and tRNA(Sec): step 1/1. In terms of biological role, catalyzes the attachment of serine to tRNA(Ser). Is also able to aminoacylate tRNA(Sec) with serine, to form the misacylated tRNA L-seryl-tRNA(Sec), which will be further converted into selenocysteinyl-tRNA(Sec). This is Serine--tRNA ligase from Thermosipho africanus (strain TCF52B).